A 552-amino-acid chain; its full sequence is Serine protease 53 (552 aa).

Residues 1–23 (MRQSWRPELLIVGAVVVIEGLQA) form the signal peptide. Peptidase S1 domains lie at 24–273 (AQRA…AHVH) and 294–525 (VACG…NLDW). The tract at residues 27–46 (ACGQRGPGPPEPQEGNTLPG) is disordered. A disulfide bridge links C62 with C78. Catalysis depends on charge relay system residues H77 and D128. 4 disulfide bridges follow: C158–C230, C187–C209, C220–C249, and C326–C342. Active-site charge relay system residues include S224, H341, and D382. Disulfide bonds link C443-C463 and C473-C501. S477 acts as the Charge relay system in catalysis.

This sequence belongs to the peptidase S1 family.

The protein localises to the secreted. In vitro can degrade the fibrinogen alpha chain of as well as pro-urokinase-type plasminogen activator. The protein is Serine protease 53 (Prss53) of Mus musculus (Mouse).